Consider the following 319-residue polypeptide: ATP-dependent 6-phosphofructokinase (319 aa).

Residue G11 coordinates ATP. 21 to 25 contacts ADP; that stretch reads RAVVR. ATP contacts are provided by residues 72–73 and 102–105; these read RC and GDGS. D103 lines the Mg(2+) pocket. 125–127 serves as a coordination point for substrate; the sequence is TID. Residue D127 is the Proton acceptor of the active site. R154 is a binding site for ADP. Substrate is bound by residues R162 and 169-171; that span reads MGR. Residues 185-187, R211, and 213-215 each bind ADP; these read GAE and KKH. Residues E222, R243, and 249–252 contribute to the substrate site; that span reads HVQR.

The protein belongs to the phosphofructokinase type A (PFKA) family. ATP-dependent PFK group I subfamily. Prokaryotic clade 'B1' sub-subfamily. As to quaternary structure, homotetramer. The cofactor is Mg(2+).

The protein resides in the cytoplasm. It carries out the reaction beta-D-fructose 6-phosphate + ATP = beta-D-fructose 1,6-bisphosphate + ADP + H(+). The protein operates within carbohydrate degradation; glycolysis; D-glyceraldehyde 3-phosphate and glycerone phosphate from D-glucose: step 3/4. Its activity is regulated as follows. Allosterically activated by ADP and other diphosphonucleosides, and allosterically inhibited by phosphoenolpyruvate. Catalyzes the phosphorylation of D-fructose 6-phosphate to fructose 1,6-bisphosphate by ATP, the first committing step of glycolysis. The protein is ATP-dependent 6-phosphofructokinase of Geobacillus sp. (strain WCH70).